Reading from the N-terminus, the 236-residue chain is Syntaxin-8 (236 aa).

The Cytoplasmic portion of the chain corresponds to 1-215 (MAPDPWFSTY…LVDRKSTSCG (215 aa)). A coiled-coil region spans residues 42–65 (LTIRTLLKNLKVKIDLLKDLLLRA). The t-SNARE coiled-coil homology domain occupies 145-207 (QKIIQEQDAG…RTEARRVTLV (63 aa)). S160 is subject to Phosphoserine. A helical; Anchor for type IV membrane protein membrane pass occupies residues 216–232 (MIMVILLLLVAIVVVAV). The Vesicular portion of the chain corresponds to 233-236 (WPTN).

This sequence belongs to the syntaxin family. As to quaternary structure, forms a SNARE complex with STX7, VTI1B and VAMP8 which functions in the homotypic fusion of late endosomes. Part of the SNARE core complex containing STX7, VAMP8 and VTI1B. Interacts with VAMP8. Interacts with HECTD3. Interacts with TPC1. In terms of processing, ubiquitinated by HECTD3.

Its subcellular location is the membrane. Its function is as follows. Vesicle trafficking protein that functions in the early secretory pathway, possibly by mediating retrograde transport from cis-Golgi membranes to the ER. The sequence is that of Syntaxin-8 (Stx8) from Mus musculus (Mouse).